The following is a 686-amino-acid chain: Protein-glutamine gamma-glutamyltransferase 2 (686 aa).

A2 carries the post-translational modification N-acetylalanine. Disulfide bonds link C230/C370 and C370/C371. Residues C277, H335, and D358 contribute to the active site. The Ca(2+) site is built by N398, D400, E437, E447, and E452. K468 is modified (N6-acetyllysine). 476–483 (RIRVGDSM) contributes to the GTP binding site. E538 provides a ligand contact to Ca(2+). GTP is bound at residue 579–582 (RDLY). Q632 is covalently cross-linked (Isoglutamyl lysine isopeptide (Gln-Lys) (interchain with K-?)).

It belongs to the transglutaminase superfamily. Transglutaminase family. Monomer. Interacts with phospholipase C; promoting alpha-1 adrenergic receptor signaling. Interacts with PLCD1. It depends on Ca(2+) as a cofactor. Disulfide bond formation inactivates the calcium-dependent acyltransferase activity. Cys-370 can form disulfide bonds with both Cys-230 and Cys-371: formation of a disulfide bond between Cys-230 and Cys-370 facilitates formation of the disulfide between Cys-370 and Cys-371, which promotes inactivation of the acyltransferase activity. May also form interchain disulfids between Cys-230 and Cys-370. Ca(2+) protects against disulfide bond formation and inactivation. Post-translationally, auto-transglutaminated: Forms covalent cross-links mediated by transglutaminase between Gln-632 and the epsilon-amino group of a lysine residue of itself or HMGB1, forming homopolymers and heteropolymers, respectively. In terms of processing, S-nitrosylated, leading to inactivation of the acyltransferase activity.

Its subcellular location is the cytoplasm. The protein resides in the cytosol. It localises to the nucleus. The protein localises to the chromosome. It is found in the secreted. Its subcellular location is the extracellular space. The protein resides in the extracellular matrix. It localises to the cell membrane. The protein localises to the mitochondrion. It carries out the reaction L-glutaminyl-[protein] + L-lysyl-[protein] = [protein]-L-lysyl-N(6)-5-L-glutamyl-[protein] + NH4(+). The enzyme catalyses L-glutaminyl-[protein] + serotonin = 5-serotonyl-L-glutamyl-[protein] + NH4(+). The catalysed reaction is L-glutaminyl-[protein] + dopamine = 5-dopaminyl-L-glutamyl-[protein] + NH4(+). It catalyses the reaction L-glutaminyl-[protein] + histamine = 5-histaminyl-L-glutamyl-[protein] + NH4(+). It carries out the reaction L-glutaminyl-[protein] + (R)-noradrenaline = 5-(R)-noradrenalinyl-L-glutamyl-[protein] + NH4(+). The enzyme catalyses L-glutaminyl-[protein] + H2O = L-glutamyl-[protein] + NH4(+). With respect to regulation, acyltransferase activity is regulated by the binding of GTP and Ca(2+): inactivated by GTP, which stabilizes its closed structure, thereby obstructing the accessibility of substrates to the active sites. In contrast, Ca(2+) acts as a cofactor by inducing conformational change to the active open form. In absence of Ca(2+), Mg(2+) may bind Ca(2+)-binding sites, promoting GTP-binding and subsequent inhibition of the acyltransferase activity. Extracellularly reduced and activated by CLIC3. Calcium-dependent acyltransferase that catalyzes the formation of covalent bonds between peptide-bound glutamine and various primary amines, such as gamma-amino group of peptide-bound lysine, or mono- and polyamines, thereby producing cross-linked or aminated proteins, respectively. Involved in many biological processes, such as bone development, angiogenesis, wound healing, cellular differentiation, chromatin modification and apoptosis. Acts as a protein-glutamine gamma-glutamyltransferase by mediating the cross-linking of proteins, such as ACO2, HSPB6, FN1, HMGB1, RAP1GDS1, SLC25A4/ANT1, SPP1 and WDR54. Under physiological conditions, the protein cross-linking activity is inhibited by GTP; inhibition is relieved by Ca(2+) in response to various stresses. When secreted, catalyzes cross-linking of proteins of the extracellular matrix, such as FN1 and SPP1 resulting in the formation of scaffolds. Plays a key role during apoptosis, both by (1) promoting the cross-linking of cytoskeletal proteins resulting in condensation of the cytoplasm, and by (2) mediating cross-linking proteins of the extracellular matrix, resulting in the irreversible formation of scaffolds that stabilize the integrity of the dying cells before their clearance by phagocytosis, thereby preventing the leakage of harmful intracellular components. In addition to protein cross-linking, can use different monoamine substrates to catalyze a vast array of protein post-translational modifications: mediates aminylation of serotonin, dopamine, noradrenaline or histamine into glutamine residues of target proteins to generate protein serotonylation, dopaminylation, noradrenalinylation or histaminylation, respectively. Mediates protein serotonylation of small GTPases during activation and aggregation of platelets, leading to constitutive activation of these GTPases. Plays a key role in chromatin organization by mediating serotonylation and dopaminylation of histone H3. Catalyzes serotonylation of 'Gln-5' of histone H3 (H3Q5ser) during serotonergic neuron differentiation, thereby facilitating transcription. Acts as a mediator of neurotransmission-independent role of nuclear dopamine in ventral tegmental area (VTA) neurons: catalyzes dopaminylation of 'Gln-5' of histone H3 (H3Q5dop), thereby regulating relapse-related transcriptional plasticity in the reward system. Regulates vein remodeling by mediating serotonylation and subsequent inactivation of ATP2A2/SERCA2. Also acts as a protein deamidase by mediating the side chain deamidation of specific glutamine residues of proteins to glutamate. Catalyzes specific deamidation of protein gliadin, a component of wheat gluten in the diet. May also act as an isopeptidase cleaving the previously formed cross-links. Also able to participate in signaling pathways independently of its acyltransferase activity: acts as a signal transducer in alpha-1 adrenergic receptor-mediated stimulation of phospholipase C-delta (PLCD) activity and is required for coupling alpha-1 adrenergic agonists to the stimulation of phosphoinositide lipid metabolism. This is Protein-glutamine gamma-glutamyltransferase 2 from Mus musculus (Mouse).